We begin with the raw amino-acid sequence, 1146 residues long: Inositol hexakisphosphate and diphosphoinositol-pentakisphosphate kinase (1146 aa).

Positions 1 to 33 are disordered; that stretch reads MSGIKKEPIESDEVPQQETKNNLPSAPSEMSPL. The segment covering 16–25 has biased composition (polar residues); it reads QQETKNNLPS. 3 positions are modified to phosphoserine: serine 31, serine 54, and serine 77. Residues 93–185 form a disordered region; sequence TALGNGNNTN…STSHPKPRLP (93 aa). A compositionally biased stretch (low complexity) spans 96–106; sequence GNGNNTNTVTT. Basic and acidic residues predominate over residues 110–120; sequence KKADSESKSEA. Over residues 125–144 the composition is skewed to polar residues; it reads LSNSNIVNDADNINSISKTG. Over residues 164–178 the composition is skewed to low complexity; it reads SVPTSSASSRKSSTS. 197 to 198 lines the substrate pocket; it reads AK. ATP-binding positions include arginine 278, lysine 351, histidine 358, arginine 377, 402 to 405, and 412 to 414; these read EQFM and DVK. Position 377 to 378 (377 to 378) interacts with substrate; the sequence is RK. Substrate is bound by residues lysine 414 and arginine 428. Residues serine 430, aspartate 475, and 487-489 contribute to the ATP site; that span reads DVN. 492 to 495 serves as a coordination point for substrate; it reads SFVK. The interval 530-597 is polyphosphoinositide-binding domain; it reads REEKEQKWVF…VLQALRIALD (68 aa). 2 positions are modified to phosphoserine: serine 895 and serine 1107. Residues 1106–1146 are disordered; it reads TSPNLSFQKRKTRRKSVSVEKLKRPASSGSSSSTSVNKTLD.

Belongs to the histidine acid phosphatase family. VIP1 subfamily.

The protein localises to the cytoplasm. It is found in the cytoskeleton. It carries out the reaction 1D-myo-inositol hexakisphosphate + ATP = 1-diphospho-1D-myo-inositol 2,3,4,5,6-pentakisphosphate + ADP. It catalyses the reaction 5-diphospho-1D-myo-inositol 1,2,3,4,6-pentakisphosphate + ATP + H(+) = 1,5-bis(diphospho)-1D-myo-inositol 2,3,4,6-tetrakisphosphate + ADP. Its function is as follows. Bifunctional inositol kinase that acts in concert with the IP6K kinases to synthesize the diphosphate group-containing inositol pyrophosphates diphosphoinositol pentakisphosphate, PP-InsP5, and bis-diphosphoinositol tetrakisphosphate, (PP)2-InsP4. Phosphorylates inositol hexakisphosphate (InsP6) at position 1 to produce PP-InsP5 which is in turn phosphorylated by IP6Ks to produce (PP)2-InsP4. Alternatively, phosphorylates PP-InsP5 at position 1, produced by IP6Ks from InsP6, to produce (PP)2-InsP4. Required for maintaining cellular integrity, normal growth and interactions with the ARP complex. Acts as a regulator of the PHO80-PHO85 cyclin/cyclin-dependent kinase (CDK) complex, thereby regulating signaling of phosphate availability. Required for the function of the cortical actin cytoskeleton, possibly by participating in correct F-actin localization and ensuring polarized growth. Regulates polarized growth and modulates interphase microtubule cytoskeleton. Regulates microtubule dynamics without the requirement of microtubule plus-end tracking protein Mal3. Required for growth zone selection. The protein is Inositol hexakisphosphate and diphosphoinositol-pentakisphosphate kinase of Saccharomyces cerevisiae (strain ATCC 204508 / S288c) (Baker's yeast).